We begin with the raw amino-acid sequence, 434 residues long: UPF0597 protein CLI_2075 (434 aa).

This sequence belongs to the UPF0597 family.

In Clostridium botulinum (strain Langeland / NCTC 10281 / Type F), this protein is UPF0597 protein CLI_2075.